Here is a 503-residue protein sequence, read N- to C-terminus: ATP synthase subunit alpha (503 aa).

170-177 lines the ATP pocket; that stretch reads GDRQTGKT.

As to quaternary structure, F-type ATPases have 2 components, CF(1) - the catalytic core - and CF(0) - the membrane proton channel. CF(1) has five subunits: alpha(3), beta(3), gamma(1), delta(1), epsilon(1). CF(0) has four main subunits: a(1), b(1), b'(1) and c(9-12).

The protein resides in the cellular thylakoid membrane. The enzyme catalyses ATP + H2O + 4 H(+)(in) = ADP + phosphate + 5 H(+)(out). Inhibited by dicyclohexylcarbodiimide. Its function is as follows. Produces ATP from ADP in the presence of a proton gradient across the membrane. The alpha chain is a regulatory subunit. In terms of biological role, the complex from the organism is particularly stable to disruption and remains functional after 6 hrs at 55 degrees Celsius. The chain is ATP synthase subunit alpha from Thermosynechococcus vestitus (strain NIES-2133 / IAM M-273 / BP-1).